Here is a 366-residue protein sequence, read N- to C-terminus: Sec-independent protein translocase protein TatC (366 aa).

7 helical membrane-spanning segments follow: residues V42–M62, H70–L90, A97–L117, I134–F154, L179–V199, L207–P227, and V230–V250. The segment covering E266–E279 has biased composition (acidic residues). The interval E266 to V366 is disordered. 2 stretches are compositionally biased toward basic and acidic residues: residues V281–A290 and D301–S318. A compositionally biased stretch (polar residues) spans D319–G333.

This sequence belongs to the TatC family. In terms of assembly, the Tat system comprises two distinct complexes: a TatABC complex, containing multiple copies of TatA, TatB and TatC subunits, and a separate TatA complex, containing only TatA subunits. Substrates initially bind to the TatABC complex, which probably triggers association of the separate TatA complex to form the active translocon.

Its subcellular location is the cell inner membrane. Part of the twin-arginine translocation (Tat) system that transports large folded proteins containing a characteristic twin-arginine motif in their signal peptide across membranes. Together with TatB, TatC is part of a receptor directly interacting with Tat signal peptides. This chain is Sec-independent protein translocase protein TatC, found in Halothiobacillus neapolitanus (strain ATCC 23641 / c2) (Thiobacillus neapolitanus).